The sequence spans 142 residues: Transcriptional regulator MraZ (142 aa).

SpoVT-AbrB domains lie at 5 to 47 (EYQH…TINE) and 76 to 119 (ACIV…SREK).

It belongs to the MraZ family. In terms of assembly, forms oligomers.

It localises to the cytoplasm. Its subcellular location is the nucleoid. The protein is Transcriptional regulator MraZ of Clostridium botulinum (strain Alaska E43 / Type E3).